The chain runs to 351 residues: Deoxyguanosinetriphosphate triphosphohydrolase-like protein (351 aa).

One can recognise an HD domain in the interval Arg-75 to Leu-196.

It belongs to the dGTPase family. Type 2 subfamily.

The polypeptide is Deoxyguanosinetriphosphate triphosphohydrolase-like protein (Desulfatibacillum aliphaticivorans).